Consider the following 36-residue polypeptide: Photosystem I reaction center subunit VIII (36 aa).

The chain crosses the membrane as a helical span at residues 6–28 (LPSIFVPLIGLFFPAIAMASLFL).

The protein belongs to the PsaI family.

The protein localises to the plastid. Its subcellular location is the chloroplast thylakoid membrane. May help in the organization of the PsaL subunit. This chain is Photosystem I reaction center subunit VIII, found in Amborella trichopoda.